A 494-amino-acid chain; its full sequence is Nuclear distribution protein PAC1 (494 aa).

Residues 14-46 (QKNELDKSVLRYLNWNYKQTVRHEHAQDYESVR) form the LisH domain. The stretch at 90 to 123 (NSIVRLQKKIIELEQNTETLVSQIKDLNTQVSEL) forms a coiled coil. WD repeat units follow at residues 153–192 (NVESSVTSVKLHPNLPIVFVATDHGKLYAFDLFNYTIPLA), 196–244 (SHTK…CKFQ), 251–292 (GHEH…SLKT), 295–334 (PHSQWVRSIDVLGDYIISGSHDTTLRLTHWPSGNGLSVGT), 347–395 (HFIE…LMAH), 415–454 (GHLSWVRDISIRGQYLFSCADDKSVRCWDLNTGQCLHVWE), and 457–492 (HTGFVNCLDLDVDFDSNVTPRQMMVTGGLDCKSNVF).

The protein belongs to the WD repeat LIS1/nudF family. In terms of assembly, self-associates. Interacts with NDL1 and dynein.

It localises to the cytoplasm. The protein resides in the cytoskeleton. It is found in the spindle pole. Its function is as follows. Positively regulates the activity of the minus-end directed microtubule motor protein dynein. Plays a central role in positioning the mitotic spindle at the bud neck during cell division. Targets cytoplasmic dynein to microtubule plus ends, thereby promoting dynein-mediated microtubule sliding along the bud cortex and consequently the movement of the mitotic spindle to the bud neck. The protein is Nuclear distribution protein PAC1 of Saccharomyces cerevisiae (strain Lalvin EC1118 / Prise de mousse) (Baker's yeast).